Here is a 131-residue protein sequence, read N- to C-terminus: Putative superoxide reductase (131 aa).

E15, H17, H45, H51, C115, and H118 together coordinate Fe cation.

This sequence belongs to the desulfoferrodoxin family. Fe cation serves as cofactor.

It catalyses the reaction reduced [rubredoxin] + superoxide + 2 H(+) = oxidized [rubredoxin] + H2O2. Its function is as follows. Uses electrons from reduced NADP, by way of rubredoxin and an oxidoreductase, to catalyze the reduction of superoxide to hydrogen peroxide. This is Putative superoxide reductase from Thermotoga maritima (strain ATCC 43589 / DSM 3109 / JCM 10099 / NBRC 100826 / MSB8).